The sequence spans 325 residues: ATPase ASNA1 homolog 2 (325 aa).

K22–T29 contributes to the ATP binding site. D51 is an active-site residue. ATP-binding residues include E231 and N258. 2 residues coordinate Zn(2+): C267 and C270.

The protein belongs to the arsA ATPase family. As to quaternary structure, homodimer.

It is found in the cytoplasm. Its subcellular location is the endoplasmic reticulum. Its function is as follows. ATPase required for the post-translational delivery of tail-anchored (TA) proteins to the endoplasmic reticulum. Recognizes and selectively binds the transmembrane domain of TA proteins in the cytosol. This complex then targets to the endoplasmic reticulum by membrane-bound receptors, where the tail-anchored protein is released for insertion. This process is regulated by ATP binding and hydrolysis. ATP binding drives the homodimer towards the closed dimer state, facilitating recognition of newly synthesized TA membrane proteins. ATP hydrolysis is required for insertion. Subsequently, the homodimer reverts towards the open dimer state, lowering its affinity for the membrane-bound receptor, and returning it to the cytosol to initiate a new round of targeting. The sequence is that of ATPase ASNA1 homolog 2 from Paramecium tetraurelia.